A 154-amino-acid polypeptide reads, in one-letter code: Myoglobin (154 aa).

One can recognise a Globin domain in the interval 2 to 148; sequence GLSDGEWQLV…FRNDIAAKYK (147 aa). At serine 4 the chain carries Phosphoserine. Residue histidine 65 participates in nitrite binding. O2 is bound at residue histidine 65. A Phosphothreonine modification is found at threonine 68. Histidine 94 lines the heme b pocket.

This sequence belongs to the globin family. Monomeric.

It is found in the cytoplasm. The protein localises to the sarcoplasm. The enzyme catalyses Fe(III)-heme b-[protein] + nitric oxide + H2O = Fe(II)-heme b-[protein] + nitrite + 2 H(+). The catalysed reaction is H2O2 + AH2 = A + 2 H2O. In terms of biological role, monomeric heme protein which primary function is to store oxygen and facilitate its diffusion within muscle tissues. Reversibly binds oxygen through a pentacoordinated heme iron and enables its timely and efficient release as needed during periods of heightened demand. Depending on the oxidative conditions of tissues and cells, and in addition to its ability to bind oxygen, it also has a nitrite reductase activity whereby it regulates the production of bioactive nitric oxide. Under stress conditions, like hypoxia and anoxia, it also protects cells against reactive oxygen species thanks to its pseudoperoxidase activity. The polypeptide is Myoglobin (MB) (Otolemur crassicaudatus (Brown greater galago)).